Reading from the N-terminus, the 232-residue chain is Cysteine proteinase inhibitor 7 (232 aa).

Positions 1–29 are cleaved as a signal peptide; the sequence is MDMRRASMCMMLICVSLVLLSGFGQFVIC. 2 consecutive Cystatin domains span residues 46 to 135 and 152 to 214; these read GGFS…KNII and FDWR…ERGN. Positions 91 to 95 match the Secondary area of contact motif; it reads QVVAG. S181 carries the post-translational modification Phosphoserine.

It belongs to the cystatin family. Phytocystatin subfamily.

The protein resides in the secreted. Functionally, specific inhibitor of cysteine proteinases. Probably involved in the regulation of endogenous processes and in defense against pests and pathogens. In Arabidopsis thaliana (Mouse-ear cress), this protein is Cysteine proteinase inhibitor 7 (CYS7).